A 91-amino-acid polypeptide reads, in one-letter code: uncharacterized protein (91 aa).

The N-terminal stretch at 1-21 (MKIISKMLVGALALAVTNVYA) is a signal peptide.

It belongs to the BhsA/McbA family.

It localises to the periplasm. This is an uncharacterized protein from Escherichia coli (strain K12).